The sequence spans 391 residues: MAIPTKERGSRLTDADILSDLQMYKPVTDSDTRNVWAFWDKGLSNSPAWNQRNVISWVRRLSPKWTVRVLDLVEGSPNHVSQFIPREMLTDVFWNRTMTGPHVGQHSSDLIRLPLLYLYGGVWLDVGMLLFRSLDALCWNALEDPETPYEVAAFKVSMGPELSFLFNGFIAARRGSVCIKYWHEIFRTLWDGATSCAGMHSHPLLAHLPVYEPPSLNGKRPPFMYAQFADYLAQVFCLERLRHLVDSKTGWDGPKFFEEKVLLFDCVTEAYWAQRLTDWNGRKQYELLDLQRGEDGLDNARVKEAEALVQGVLSMSSTMKLSHGLVTAGREYLADIWDSPKNHDADIRPGTFAAYLREASETFEQTKELVPLRMPVIEKALLRAGVTEVVR.

This sequence belongs to the afumC glycosyltransferase family.

It participates in secondary metabolite biosynthesis. Activity is significantly decreased by addition of divalent cations such as Mg(2+), Mn(2+), Zn(2+), Ca(2+), Co(2+), Cu(2+), and Ni(2+); while Fe(2+) has little effect. Glycosyltransferase; part of the gene cluster that mediates the biosynthesis fumihopaside A, a hopane-type glucoside that enhances the thermotolerance and UV resistance of N.fumigata. The first step of fumihopaside A biosynthesis is performed by the squalene hopane cyclase afumA that catalyzes the cyclization of 3S-oxidosqualene into the hopene 21-beta-H-hopane-3-beta,22-diol. The cytochrome P450 monooxygenase afumB is responsible for both hydroxylation at C-24 and oxidations at C-30 of the afumA product. The glycosyltransferase afumC then catalyzes the glycosylation at C-24, using UDP-D-glucose as a donor, to produce fumihopaside A. AfumC is also able to accept UDP-D-galactose and UDP-D-glucuronic acid as donors to yield minor derivatives. Fumihopaside B, another minor derivative produced, is different from fumihopaside A due to the presence of a double bond between C-22 and C-29. The protein is Glycosyltransferase afumC of Aspergillus fumigatus (strain CBS 144.89 / FGSC A1163 / CEA10) (Neosartorya fumigata).